Reading from the N-terminus, the 224-residue chain is Probable 2' cyclic ADP-D-ribose synthase BdTIR (224 aa).

A TIR domain is found at 51–178; the sequence is SRYEVFINHR…RFKFALREAK (128 aa). NAD(+)-binding positions include 60–65 and G93; that span reads RGVDTK. E127 is a catalytic residue.

Homodimer.

It carries out the reaction NAD(+) + H2O = ADP-D-ribose + nicotinamide + H(+). It catalyses the reaction NADP(+) + H2O = ADP-D-ribose 2'-phosphate + nicotinamide + H(+). The enzyme catalyses NAD(+) = 2'cADPR + nicotinamide + H(+). In terms of biological role, an NAD(+) hydrolase (NADase). Upon activation catalyzes cleavage of NAD(+) into ADP-D-ribose (ADPR) and nicotinamide; NAD(+) cleavage triggers a defense system that promotes cell death. In addition to ADPR, also generates a cyclization variant of cyclic ADPR termed v-cADPR (2'cADPR). Also hydrolyzes NADP(+), but not other NAD(+)-related molecules. v-cADPR activates ThsA, an NAD(+) hydrolase in B.cereus (AC J8G6Z1). Probably makes 2'cADPR; the cADPR made by this protein is bound by cmTad1 (AC P0DW61) and activates ThsA from B.cereus. Boiling cmTad1 bound to the cyclic nucleotide releases 2'cADPR, strongly suggesting it is the product of this protein. This Brachypodium distachyon (Purple false brome) protein is Probable 2' cyclic ADP-D-ribose synthase BdTIR.